Here is a 187-residue protein sequence, read N- to C-terminus: Superoxide dismutase [Cu-Zn] (187 aa).

An N-terminal signal peptide occupies residues 1-21 (MSLLPTGTLILLVLFILVLIT). Cu cation contacts are provided by H76, H78, and H93. C87 and C176 form a disulfide bridge. Residues H93, H101, H110, and D113 each contribute to the Zn(2+) site. H150 is a Cu cation binding site.

This sequence belongs to the Cu-Zn superoxide dismutase family. Cu cation is required as a cofactor. Requires Zn(2+) as cofactor.

It catalyses the reaction 2 superoxide + 2 H(+) = H2O2 + O2. In terms of biological role, destroys radicals which are normally produced within the cells and which are toxic to biological systems. The sequence is that of Superoxide dismutase [Cu-Zn] from Chlorella (PBCV-1).